The chain runs to 219 residues: 7-cyano-7-deazaguanine synthase (219 aa).

10-20 (FSGGQDSTTCL) contributes to the ATP binding site. 4 residues coordinate Zn(2+): cysteine 186, cysteine 195, cysteine 198, and cysteine 201.

This sequence belongs to the QueC family. As to quaternary structure, homodimer. Zn(2+) serves as cofactor.

It catalyses the reaction 7-carboxy-7-deazaguanine + NH4(+) + ATP = 7-cyano-7-deazaguanine + ADP + phosphate + H2O + H(+). It participates in purine metabolism; 7-cyano-7-deazaguanine biosynthesis. In terms of biological role, catalyzes the ATP-dependent conversion of 7-carboxy-7-deazaguanine (CDG) to 7-cyano-7-deazaguanine (preQ(0)). The chain is 7-cyano-7-deazaguanine synthase from Bacillus velezensis (strain DSM 23117 / BGSC 10A6 / LMG 26770 / FZB42) (Bacillus amyloliquefaciens subsp. plantarum).